The primary structure comprises 433 residues: Adenylosuccinate synthetase (433 aa).

GTP is bound by residues 11–17 and 39–41; these read GDEGKGK and GHT. The active-site Proton acceptor is Asp-12. Residues Asp-12 and Gly-39 each contribute to the Mg(2+) site. Residues 12–15, 37–40, Thr-134, Arg-148, Asn-230, Thr-245, and Arg-309 contribute to the IMP site; these read DEGK and NAGH. His-40 (proton donor) is an active-site residue. Position 305–311 (305–311) interacts with substrate; the sequence is VTTGRKR. GTP is bound by residues Arg-311, 337-339, and 419-421; these read KLD and GTG.

The protein belongs to the adenylosuccinate synthetase family. Homodimer. It depends on Mg(2+) as a cofactor.

It is found in the cytoplasm. It catalyses the reaction IMP + L-aspartate + GTP = N(6)-(1,2-dicarboxyethyl)-AMP + GDP + phosphate + 2 H(+). It functions in the pathway purine metabolism; AMP biosynthesis via de novo pathway; AMP from IMP: step 1/2. In terms of biological role, plays an important role in the de novo pathway and in the salvage pathway of purine nucleotide biosynthesis. Catalyzes the first committed step in the biosynthesis of AMP from IMP. This is Adenylosuccinate synthetase from Saccharomyces cerevisiae (strain JAY291) (Baker's yeast).